Reading from the N-terminus, the 32-residue chain is Cyclotide Hyfl-C (32 aa).

The segment at residues 1–32 is a cross-link (cyclopeptide (Gly-Asn)); the sequence is GSPRQCAETCFIGKCYTEELGCTCTAFLCMKN. 3 disulfide bridges follow: Cys-6–Cys-22, Cys-10–Cys-24, and Cys-15–Cys-29.

This sequence belongs to the cyclotide family. Moebius subfamily. Post-translationally, this is a cyclic peptide.

Its function is as follows. Probably participates in a plant defense mechanism. In Hybanthus floribundus (Greenviolet), this protein is Cyclotide Hyfl-C.